The primary structure comprises 223 residues: Endonuclease NucS (223 aa).

The protein belongs to the NucS endonuclease family.

The protein localises to the cytoplasm. Its function is as follows. Cleaves both 3' and 5' ssDNA extremities of branched DNA structures. The protein is Endonuclease NucS of Streptomyces coelicolor (strain ATCC BAA-471 / A3(2) / M145).